The primary structure comprises 196 residues: Corrinoid adenosyltransferase CobA (196 aa).

36–42 lines the ATP pocket; sequence GNGKGKT.

It belongs to the Cob(I)alamin adenosyltransferase family. Homodimer.

Its subcellular location is the cytoplasm. The enzyme catalyses 2 cob(II)yrinate a,c diamide + reduced [electron-transfer flavoprotein] + 2 ATP = 2 adenosylcob(III)yrinate a,c-diamide + 2 triphosphate + oxidized [electron-transfer flavoprotein] + 3 H(+). It catalyses the reaction 2 cob(II)alamin + reduced [electron-transfer flavoprotein] + 2 ATP = 2 adenosylcob(III)alamin + 2 triphosphate + oxidized [electron-transfer flavoprotein] + 3 H(+). It participates in cofactor biosynthesis; adenosylcobalamin biosynthesis; adenosylcobalamin from cob(II)yrinate a,c-diamide: step 2/7. In terms of biological role, required for both de novo synthesis of the corrin ring for the assimilation of exogenous corrinoids. Participates in the adenosylation of a variety of incomplete and complete corrinoids. This Salmonella typhimurium (strain LT2 / SGSC1412 / ATCC 700720) protein is Corrinoid adenosyltransferase CobA (btuR).